Consider the following 449-residue polypeptide: Exodeoxyribonuclease 7 large subunit (449 aa).

The protein belongs to the XseA family. As to quaternary structure, heterooligomer composed of large and small subunits.

The protein resides in the cytoplasm. The catalysed reaction is Exonucleolytic cleavage in either 5'- to 3'- or 3'- to 5'-direction to yield nucleoside 5'-phosphates.. Bidirectionally degrades single-stranded DNA into large acid-insoluble oligonucleotides, which are then degraded further into small acid-soluble oligonucleotides. The sequence is that of Exodeoxyribonuclease 7 large subunit from Lacticaseibacillus casei (strain BL23) (Lactobacillus casei).